Here is a 320-residue protein sequence, read N- to C-terminus: Homoserine kinase (320 aa).

Residue 100–110 (PLSSGMGSSAA) participates in ATP binding.

It belongs to the GHMP kinase family. Homoserine kinase subfamily.

The protein resides in the cytoplasm. It catalyses the reaction L-homoserine + ATP = O-phospho-L-homoserine + ADP + H(+). It functions in the pathway amino-acid biosynthesis; L-threonine biosynthesis; L-threonine from L-aspartate: step 4/5. Its function is as follows. Catalyzes the ATP-dependent phosphorylation of L-homoserine to L-homoserine phosphate. This Chlorobium phaeovibrioides (strain DSM 265 / 1930) (Prosthecochloris vibrioformis (strain DSM 265)) protein is Homoserine kinase.